We begin with the raw amino-acid sequence, 332 residues long: Cell division protein ZipA (332 aa).

At 1–6 the chain is on the periplasmic side; sequence MMQDLR. A helical membrane pass occupies residues 7 to 27; that stretch reads LILIVVGAIAIIALLLHGLWT. Residues 28–332 lie on the Cytoplasmic side of the membrane; sequence SRKERSSLFR…RLREVLENNA (305 aa). 2 stretches are compositionally biased toward basic and acidic residues: residues 34-51 and 61-72; these read SLFR…REQS and GEVRVRSAHPED. A disordered region spans residues 34 to 184; the sequence is SLFRDRPAKR…PAVAHEPQPA (151 aa). Residues 98–107 show a composition bias toward low complexity; the sequence is PAPRAVQPAA. Acidic residues predominate over residues 121–136; the sequence is DDILLDNYAQEEDDEP. Positions 155–171 are enriched in low complexity; sequence PAAEPAFHAEPAHQPQP.

Belongs to the ZipA family. In terms of assembly, interacts with FtsZ via their C-terminal domains.

It is found in the cell inner membrane. Essential cell division protein that stabilizes the FtsZ protofilaments by cross-linking them and that serves as a cytoplasmic membrane anchor for the Z ring. Also required for the recruitment to the septal ring of downstream cell division proteins. The polypeptide is Cell division protein ZipA (Serratia proteamaculans (strain 568)).